The sequence spans 341 residues: Biotin synthase (341 aa).

The 228-residue stretch at 40–267 folds into the Radical SAM core domain; that stretch reads AEIQVSTLLS…RSMVRLSAGR (228 aa). [4Fe-4S] cluster contacts are provided by Cys55, Cys59, and Cys62. [2Fe-2S] cluster is bound by residues Cys99, Cys130, Cys190, and Arg262.

This sequence belongs to the radical SAM superfamily. Biotin synthase family. As to quaternary structure, homodimer. [4Fe-4S] cluster is required as a cofactor. It depends on [2Fe-2S] cluster as a cofactor.

It carries out the reaction (4R,5S)-dethiobiotin + (sulfur carrier)-SH + 2 reduced [2Fe-2S]-[ferredoxin] + 2 S-adenosyl-L-methionine = (sulfur carrier)-H + biotin + 2 5'-deoxyadenosine + 2 L-methionine + 2 oxidized [2Fe-2S]-[ferredoxin]. It functions in the pathway cofactor biosynthesis; biotin biosynthesis; biotin from 7,8-diaminononanoate: step 2/2. Catalyzes the conversion of dethiobiotin (DTB) to biotin by the insertion of a sulfur atom into dethiobiotin via a radical-based mechanism. This is Biotin synthase from Xylella fastidiosa (strain 9a5c).